The sequence spans 412 residues: Angiopoietin-related protein 4 (412 aa).

Positions M1 to A23 are cleaved as a signal peptide. A coiled-coil region spans residues E106–L153. An N-linked (GlcNAc...) asparagine glycan is attached at N183. A Fibrinogen C-terminal domain is found at S185–V407. Cystine bridges form between C194-C222 and C347-C360.

In terms of assembly, homooligomer; disulfide-linked via Cys residues in the N-terminal part of the protein. The homooligomer undergoes proteolytic processing to release the ANGPTL4 C-terminal chain, which circulates as a monomer. The homooligomer unprocessed form is able to interact with the extracellular matrix. In terms of processing, N-glycosylated. Forms disulfide-linked dimers and tetramers. Post-translationally, cleaved into a smaller N-terminal chain and a larger chain that contains the fibrinogen C-terminal domain; both cleaved and uncleaved forms are detected in the extracellular space. The cleaved form is not present within the cell.

It is found in the secreted. Its subcellular location is the extracellular space. The protein localises to the extracellular matrix. In terms of biological role, mediates inactivation of the lipoprotein lipase LPL, and thereby plays a role in the regulation of triglyceride clearance from the blood serum and in lipid metabolism. May also play a role in regulating glucose homeostasis and insulin sensitivity. Inhibits proliferation, migration, and tubule formation of endothelial cells and reduces vascular leakage. Upon heterologous expression, inhibits the adhesion of endothelial cell to the extracellular matrix (ECM), and inhibits the reorganization of the actin cytoskeleton, formation of actin stress fibers and focal adhesions in endothelial cells that have adhered to ANGPTL4-containing ECM (in vitro). Depending on context, may modulate tumor-related angiogenesis. Functionally, mediates inactivation of the lipoprotein lipase LPL, and thereby plays an important role in the regulation of triglyceride clearance from the blood serum and in lipid metabolism. Has higher activity in LPL inactivation than the uncleaved protein. The chain is Angiopoietin-related protein 4 (ANGPTL4) from Sus scrofa (Pig).